The following is a 366-amino-acid chain: Palmitoyltransferase ZDHHC2 (366 aa).

Topologically, residues 1–15 (MAPSGPGGVRRRCRR) are cytoplasmic. Residues 16 to 36 (VLYWIPVVFISLLLGWSYYAY) traverse the membrane as a helical segment. Topologically, residues 37 to 47 (AIQLCIVSMEN) are lumenal. The chain crosses the membrane as a helical span at residues 48–68 (IGEQVVCLMAYHLLFAMFVWS). Over 69–169 (YWKTIFTLPM…NNCVGFSNYK (101 aa)) the chain is Cytoplasmic. A DHHC domain is found at 126 to 176 (RYCDRCRLIKPDRCHHCSVCDKCILKMDHHCPWVNNCVGFSNYKFFLLFLA). Cys-156 (S-palmitoyl cysteine intermediate) is an active-site residue. Residues 170–190 (FFLLFLAYSLLYCLFIAATDL) traverse the membrane as a helical segment. At 191 to 207 (QYFIRFWTNGLPDTQAK) the chain is on the lumenal side. Residues 208–228 (FHIMFLFFAAAMFSVSLSSLF) traverse the membrane as a helical segment. Residues 229 to 366 (GYHCWLVSKN…NPALTMENET (138 aa)) are Cytoplasmic-facing. Polar residues-rich tracts occupy residues 297 to 316 (VNQD…TAKN) and 332 to 349 (SHLL…SNSG). Residues 297 to 366 (VNQDPEQPST…NPALTMENET (70 aa)) form a disordered region. The mediates localization to plasma membrane and recycling endosomes stretch occupies residues 298–366 (NQDPEQPSTP…NPALTMENET (69 aa)). The Non-canonical dileucine endocytic signal motif lies at 334-335 (LL). The NPxY-like endocytic signal signature appears at 357–360 (NPAL).

This sequence belongs to the DHHC palmitoyltransferase family. As to quaternary structure, monomer. Homodimer. The monomeric form has a higher catalytic activity. Post-translationally, autopalmitoylated.

The protein resides in the postsynaptic density. It localises to the postsynaptic recycling endosome membrane. Its subcellular location is the cell membrane. It is found in the endoplasmic reticulum membrane. The protein localises to the golgi apparatus membrane. It carries out the reaction L-cysteinyl-[protein] + hexadecanoyl-CoA = S-hexadecanoyl-L-cysteinyl-[protein] + CoA. The enzyme catalyses L-cysteinyl-[protein] + tetradecanoyl-CoA = S-tetradecanoyl-L-cysteinyl-[protein] + CoA. It catalyses the reaction L-cysteinyl-[protein] + octadecanoyl-CoA = S-octadecanoyl-L-cysteinyl-[protein] + CoA. Palmitoyltransferase that catalyzes the addition of palmitate onto various protein substrates and is involved in a variety of cellular processes. Has no stringent fatty acid selectivity and in addition to palmitate can also transfer onto target proteins myristate from tetradecanoyl-CoA and stearate from octadecanoyl-CoA. In the nervous system, plays a role in long term synaptic potentiation by palmitoylating AKAP5 through which it regulates protein trafficking from the dendritic recycling endosomes to the plasma membrane and controls both structural and functional plasticity at excitatory synapses. In dendrites, mediates the palmitoylation of DLG4 when synaptic activity decreases and induces synaptic clustering of DLG4 and associated AMPA-type glutamate receptors. Also mediates the de novo and turnover palmitoylation of RGS7BP, a shuttle for Gi/o-specific GTPase-activating proteins/GAPs, promoting its localization to the plasma membrane in response to the activation of G protein-coupled receptors. Through the localization of these GTPase-activating proteins/GAPs, it also probably plays a role in G protein-coupled receptors signaling in neurons. Also probably plays a role in cell adhesion by palmitoylating CD9 and CD151 to regulate their expression and function. Palmitoylates the endoplasmic reticulum protein CKAP4 and regulates its localization to the plasma membrane. Could also palmitoylate LCK and regulate its localization to the plasma membrane. This Rattus norvegicus (Rat) protein is Palmitoyltransferase ZDHHC2.